Consider the following 526-residue polypeptide: MIRIKKKLILTIIYIHLFILNRLSFENAIKKTKNQENNLTLLPIKSTEEEKDDIKNGKDIKKEIDNDKENIKTNNAKDHSTYIKSYLNTNVNDGLKYLFIPSHNSFIKKYSVFNQINDGMLLNEKNDVKNNEDYKNVDYKNVNFLQYHFKELSNYNIANSIDILQEKEGHLDFVIIPHYTFLDYYKHLSYNSIYHKSSTYGKCIAVDAFIKKINETYDKVKSKCNDIKNDLIATIKKLEHPYDINNKNDDSYRYDISEEIDDKSEETDDETEEVEDSIQDTDSNHTPSNKKKNDLMNRTFKKMMDEYNTKKKKLIKCIKNHENDFNKICMDMKNYGTNLFEQLSCYNNNFCNTNGIRYHYDEYIHKLILSVKSKNLNKDLSDMTNILQQSELLLTNLNKKMGSYIYIDTIKFIHKEMKHIFNRIEYHTKIINDKTKIIQDKIKLNIWRTFQKDELLKRILDMSNEYSLFITSDHLRQMLYNTFYSKEKHLNNIFHHLIYVLQMKFNDVPIKMEYFQTYKKNKPLTQ.

Residues 1-24 form the signal peptide; it reads MIRIKKKLILTIIYIHLFILNRLS. A mediates interaction with human BSG region spans residues 33-51; sequence KNQENNLTLLPIKSTEEEK. N-linked (GlcNAc...) asparagine glycosylation is found at Asn38 and Asn214. 2 disulfides stabilise this stretch: Cys224–Cys317 and Cys345–Cys351. Over residues 259-279 the composition is skewed to acidic residues; it reads EIDDKSEETDDETEEVEDSIQ. The disordered stretch occupies residues 259–294; sequence EIDDKSEETDDETEEVEDSIQDTDSNHTPSNKKKND. Asn297 carries N-linked (GlcNAc...) asparagine glycosylation.

In terms of assembly, forms a complex composed of RH5, P113 and human BSG/basigin; the complex bridges the merozoite and host erythrocyte membranes. Within the complex, interacts (via C-terminus) with human BSG/basigin isoform 2 (via the extracellular domain); the interaction is independent of BSG glycosylation status. Weakly interacts with P.troglodytes BSG but not with G.gorilla BSG. Also, interacts (via N-terminus) with P113; the interaction tethers RH5 to the merozoite membrane. Component of the PfRH5 adhesion complex composed of 1 copy of CyRPA, RH5 and RIPR; the complex is formed during merozoite invasion of host erythrocytes specifically at the interface between the parasite and host membranes. Within the complex, interacts with CyRPA. CyRPA recruits RIPR to the RH5-P113-BSG complex; the formation of the PfRH5 adhesion complex increases the affinity of RH5 for BSG and probably leads to the release of RH5 from P113 while maintaining the interaction of the PfRH5 adhesion complex with BSG. Cleaved into a 45kDa form during merozoite invasion of host erythrocyte.

The protein localises to the secreted. It is found in the cytoplasmic vesicle. It localises to the secretory vesicle. The protein resides in the rhoptry lumen. Its subcellular location is the host cell membrane. Essential for the invasion of host erythrocytes by blood stage merozoites. By binding P113 at the surface of the merozoite and human BSG/basigin on the erythrocyte membrane, leads to the establishment of a tight junction between the merozoite and host erythrocyte membranes. In addition, the interaction with BSG results in BSG dimerization which triggers an increase in intracellular Ca(2+) in the erythrocyte. This essential step leads to a rearrangement of the erythrocyte cytoskeleton required for the merozoite invasion. The sequence is that of Reticulocyte-binding protein homolog 5 from Plasmodium falciparum (isolate 3D7).